The chain runs to 207 residues: Probable GTP-binding protein EngB (207 aa).

Residues 24-199 (GGYEVAFAGR…RGIVGGWLGL (176 aa)) form the EngB-type G domain. GTP is bound by residues 32-39 (GRSNAGKS), 59-63 (GRTQQ), 77-80 (DLPG), 144-147 (TKAD), and 178-180 (YSG). Positions 39 and 61 each coordinate Mg(2+).

Belongs to the TRAFAC class TrmE-Era-EngA-EngB-Septin-like GTPase superfamily. EngB GTPase family. Mg(2+) is required as a cofactor.

In terms of biological role, necessary for normal cell division and for the maintenance of normal septation. In Xanthomonas oryzae pv. oryzae (strain MAFF 311018), this protein is Probable GTP-binding protein EngB.